The primary structure comprises 156 residues: Small ribosomal subunit protein uS7 (156 aa).

The protein belongs to the universal ribosomal protein uS7 family. Part of the 30S ribosomal subunit. Contacts proteins S9 and S11.

Functionally, one of the primary rRNA binding proteins, it binds directly to 16S rRNA where it nucleates assembly of the head domain of the 30S subunit. Is located at the subunit interface close to the decoding center, probably blocks exit of the E-site tRNA. The chain is Small ribosomal subunit protein uS7 from Thermomicrobium roseum (strain ATCC 27502 / DSM 5159 / P-2).